The primary structure comprises 188 residues: Putative 3-methyladenine DNA glycosylase (188 aa).

Belongs to the DNA glycosylase MPG family.

In Ehrlichia ruminantium (strain Welgevonden), this protein is Putative 3-methyladenine DNA glycosylase.